Here is a 359-residue protein sequence, read N- to C-terminus: Protein mab-21-like 2 (359 aa).

It belongs to the mab-21 family.

Its subcellular location is the nucleus. The protein localises to the cytoplasm. Required for several aspects of embryonic development including normal development of the eye. The protein is Protein mab-21-like 2 (MAB21L2) of Homo sapiens (Human).